Consider the following 455-residue polypeptide: MQAATETIVAIATAQGRGGVGIVRVSGPLAGQMAVAVSGRQLKARHAHYGPFLDAGGQVIDEGLSLYFPGPNSFTGEDVLELQGHGGPVVLDLLVQRCLELGARQARPGEFSERAFLNDKLDLAQAEAIADLIEASSEQAARNALRSLQGEFSRRVHALTEQLISLRIYVEAAIDFPEEEIDFLADGHVLGLLEKVRTELSTVQREASQGALLRDGMTVVIAGRPNAGKSSLLNALAGREAAIVTDIAGTTRDVLREHIHIDGMPLHVVDTAGLRDTEDHVEKIGVERALKAIGEADRVLLVVDATAPEAADPFSLWPEFLDQRPEPGKVTLIRNKADLSTESIGLEESADGHVTITLSARTGAGLELLREHLKACMGFEQTAESGFSARRRHLEALRLAGQALEHGHSQLIHNGAGELLAEDLRQAQQHLGEITGAFTPDDLLGRIFSSFCIGK.

Residues Arg-24, Glu-81, and Lys-120 each contribute to the (6S)-5-formyl-5,6,7,8-tetrahydrofolate site. The TrmE-type G domain occupies 216–378; sequence GMTVVIAGRP…LREHLKACMG (163 aa). Asn-226 is a K(+) binding site. GTP contacts are provided by residues 226–231, 245–251, 270–273, 335–338, and 359–361; these read NAGKSS, TDIAGTT, DTAG, NKAD, and SAR. Ser-230 contributes to the Mg(2+) binding site. Residues Thr-245, Ile-247, and Thr-250 each coordinate K(+). Thr-251 is a binding site for Mg(2+). (6S)-5-formyl-5,6,7,8-tetrahydrofolate is bound at residue Lys-455.

This sequence belongs to the TRAFAC class TrmE-Era-EngA-EngB-Septin-like GTPase superfamily. TrmE GTPase family. Homodimer. Heterotetramer of two MnmE and two MnmG subunits. K(+) is required as a cofactor.

The protein resides in the cytoplasm. Functionally, exhibits a very high intrinsic GTPase hydrolysis rate. Involved in the addition of a carboxymethylaminomethyl (cmnm) group at the wobble position (U34) of certain tRNAs, forming tRNA-cmnm(5)s(2)U34. The protein is tRNA modification GTPase MnmE of Pseudomonas aeruginosa (strain ATCC 15692 / DSM 22644 / CIP 104116 / JCM 14847 / LMG 12228 / 1C / PRS 101 / PAO1).